Consider the following 745-residue polypeptide: Cellulose synthase 1 catalytic subunit [UDP-forming] (745 aa).

Transmembrane regions (helical) follow at residues 29-49, 106-126, and 153-173; these read YVVG…TLSL, GILG…LFLS, and IFIP…LGAL. The catalytic subdomain A stretch occupies residues 147–240; it reads EWPTVDIFIP…HILILDCDHI (94 aa). The active site involves aspartate 189. Substrate is bound by residues aspartate 236 and aspartate 238. Residues 317-377 form a catalytic subdomain B region; that stretch reads KAIEEIGGFA…GQRMRWARGM (61 aa). Aspartate 333 is an active-site residue. A run of 6 helical transmembrane segments spans residues 407-427, 430-450, 468-488, 515-535, 547-567, and 649-669; these read FFFA…LFFS, IIAA…FHSI, VYET…MLFP, NIIF…ALIF, ALNC…ISVG, and AVFT…RFVF. Residues 572 to 670 enclose the PilZ domain; that stretch reads QLRQSHRIEA…EAAVVRFVFG (99 aa). Basic residues predominate over residues 708-717; that stretch reads IAHSRPKKKP. Residues 708–745 are disordered; that stretch reads IAHSRPKKKPIALPVERREPTTSQGGQKQEGKISRAAS. Over residues 736–745 the composition is skewed to basic and acidic residues; it reads QEGKISRAAS.

Belongs to the glycosyltransferase 2 family. The cofactor is Mg(2+).

It localises to the cell inner membrane. The catalysed reaction is [(1-&gt;4)-beta-D-glucosyl](n) + UDP-alpha-D-glucose = [(1-&gt;4)-beta-D-glucosyl](n+1) + UDP + H(+). It participates in glycan metabolism; bacterial cellulose biosynthesis. Its activity is regulated as follows. Activated by bis-(3'-5') cyclic diguanylic acid (c-di-GMP). Its function is as follows. Catalytic subunit of cellulose synthase. It polymerizes uridine 5'-diphosphate glucose to cellulose. The thick cellulosic mats generated by this enzyme probably provide a specialized protective environment to the bacterium. The chain is Cellulose synthase 1 catalytic subunit [UDP-forming] (bcsAI) from Komagataeibacter xylinus (Gluconacetobacter xylinus).